A 268-amino-acid polypeptide reads, in one-letter code: Tryptophan synthase alpha chain (268 aa).

Catalysis depends on proton acceptor residues Glu-49 and Asp-60.

It belongs to the TrpA family. In terms of assembly, tetramer of two alpha and two beta chains.

The catalysed reaction is (1S,2R)-1-C-(indol-3-yl)glycerol 3-phosphate + L-serine = D-glyceraldehyde 3-phosphate + L-tryptophan + H2O. The protein operates within amino-acid biosynthesis; L-tryptophan biosynthesis; L-tryptophan from chorismate: step 5/5. Functionally, the alpha subunit is responsible for the aldol cleavage of indoleglycerol phosphate to indole and glyceraldehyde 3-phosphate. The protein is Tryptophan synthase alpha chain of Citrobacter koseri (strain ATCC BAA-895 / CDC 4225-83 / SGSC4696).